An 85-amino-acid chain; its full sequence is Cell division topological specificity factor (85 aa).

The protein belongs to the MinE family.

Its function is as follows. Prevents the cell division inhibition by proteins MinC and MinD at internal division sites while permitting inhibition at polar sites. This ensures cell division at the proper site by restricting the formation of a division septum at the midpoint of the long axis of the cell. The protein is Cell division topological specificity factor of Xanthomonas euvesicatoria pv. vesicatoria (strain 85-10) (Xanthomonas campestris pv. vesicatoria).